Consider the following 227-residue polypeptide: Glutathione S-transferase U13 (227 aa).

The GST N-terminal domain maps to 5 to 86 (DTVKLIGSWS…YVDEAWPSVP (82 aa)). Residues 15 to 16 (SP), 43 to 44 (EK), 57 to 58 (KV), and 70 to 71 (ES) each bind glutathione. In terms of domain architecture, GST C-terminal spans 92-224 (DAYDRASARF…EVVAFAKQKF (133 aa)). Thr158 carries the phosphothreonine modification.

It belongs to the GST superfamily. Tau family.

Its subcellular location is the cytoplasm. The protein resides in the cytosol. It catalyses the reaction RX + glutathione = an S-substituted glutathione + a halide anion + H(+). In terms of biological role, in vitro, possesses glutathione S-transferase activity toward 1-chloro-2,4-dinitrobenzene (CDNB) and benzyl isothiocyanate (BITC). May be involved in the conjugation of reduced glutathione to a wide number of exogenous and endogenous hydrophobic electrophiles and have a detoxification role against certain herbicides. The sequence is that of Glutathione S-transferase U13 (GSTU13) from Arabidopsis thaliana (Mouse-ear cress).